The primary structure comprises 528 residues: FAD-dependent monooxygenase DEP2 (528 aa).

Positions 1-23 are cleaved as a signal peptide; it reads MEDGRSTFKVIIIGAGVTGLTLA. Residues aspartate 37, arginine 110, aspartate 311, and glycine 324 each coordinate FAD. The helical transmembrane segment at 479 to 499 threads the bilayer; sequence VFPQILGVLMVMWSSVWLFHL. An N-linked (GlcNAc...) asparagine glycan is attached at asparagine 521.

The protein belongs to the paxM FAD-dependent monooxygenase family. It depends on FAD as a cofactor.

The protein resides in the membrane. It participates in polyketide biosynthesis. In terms of biological role, FAD-dependent monooxygenase; part of the gene cluster that mediates the biosynthesis of depudecin, a highly oxidized eleven-carbon linear polyketide that acts as a histone deacetylase (HDAC) inhibitor and makes a small contribution to pathogenesis. The reducing polyketide synthase DEP5 is the central enzyme in depudecin biosynthesis by yielding the backbone polyketide chain. The monooxygenases DEP2 and DEP4, as well as the uncharacterized protein DEP1, then act as tailoring enzymes to modify the intermediate polyketide chain into depudecin. This chain is FAD-dependent monooxygenase DEP2, found in Alternaria brassicicola (Dark leaf spot agent).